Here is a 438-residue protein sequence, read N- to C-terminus: Proline--tRNA ligase (438 aa).

This sequence belongs to the class-II aminoacyl-tRNA synthetase family. ProS type 2 subfamily. As to quaternary structure, homodimer.

It localises to the cytoplasm. The catalysed reaction is tRNA(Pro) + L-proline + ATP = L-prolyl-tRNA(Pro) + AMP + diphosphate. Catalyzes the attachment of proline to tRNA(Pro) in a two-step reaction: proline is first activated by ATP to form Pro-AMP and then transferred to the acceptor end of tRNA(Pro). This is Proline--tRNA ligase from Gluconobacter oxydans (strain 621H) (Gluconobacter suboxydans).